An 80-amino-acid polypeptide reads, in one-letter code: Biotin synthase auxiliary protein (80 aa).

This sequence belongs to the BsaP family. Requires iron-sulfur cluster as cofactor.

Its function is as follows. Required for the activity of the biotin synthase BioB. The polypeptide is Biotin synthase auxiliary protein (Mycobacterium leprae (strain TN)).